Consider the following 132-residue polypeptide: Small ribosomal subunit protein uS8 (132 aa).

This sequence belongs to the universal ribosomal protein uS8 family. As to quaternary structure, part of the 30S ribosomal subunit. Contacts proteins S5 and S12.

One of the primary rRNA binding proteins, it binds directly to 16S rRNA central domain where it helps coordinate assembly of the platform of the 30S subunit. This is Small ribosomal subunit protein uS8 from Geotalea uraniireducens (strain Rf4) (Geobacter uraniireducens).